The following is a 513-amino-acid chain: Histidine ammonia-lyase (513 aa).

A cross-link (5-imidazolinone (Ala-Gly)) is located at residues 143–145 (ASG). Position 144 is a 2,3-didehydroalanine (Ser) (Ser144).

This sequence belongs to the PAL/histidase family. In terms of processing, contains an active site 4-methylidene-imidazol-5-one (MIO), which is formed autocatalytically by cyclization and dehydration of residues Ala-Ser-Gly.

It localises to the cytoplasm. The enzyme catalyses L-histidine = trans-urocanate + NH4(+). It participates in amino-acid degradation; L-histidine degradation into L-glutamate; N-formimidoyl-L-glutamate from L-histidine: step 1/3. The sequence is that of Histidine ammonia-lyase from Xanthomonas campestris pv. campestris (strain B100).